Here is a 153-residue protein sequence, read N- to C-terminus: UPF0178 protein Atu1478 (153 aa).

Belongs to the UPF0178 family.

In Agrobacterium fabrum (strain C58 / ATCC 33970) (Agrobacterium tumefaciens (strain C58)), this protein is UPF0178 protein Atu1478.